Consider the following 256-residue polypeptide: DNA repair protein RecO (256 aa).

It belongs to the RecO family.

Involved in DNA repair and RecF pathway recombination. In Thiobacillus denitrificans (strain ATCC 25259 / T1), this protein is DNA repair protein RecO.